Consider the following 429-residue polypeptide: Glutamate-1-semialdehyde 2,1-aminomutase (429 aa).

Lys-267 carries the N6-(pyridoxal phosphate)lysine modification.

This sequence belongs to the class-III pyridoxal-phosphate-dependent aminotransferase family. HemL subfamily. As to quaternary structure, homodimer. It depends on pyridoxal 5'-phosphate as a cofactor.

It localises to the cytoplasm. The catalysed reaction is (S)-4-amino-5-oxopentanoate = 5-aminolevulinate. It participates in porphyrin-containing compound metabolism; protoporphyrin-IX biosynthesis; 5-aminolevulinate from L-glutamyl-tRNA(Glu): step 2/2. The sequence is that of Glutamate-1-semialdehyde 2,1-aminomutase from Xanthomonas campestris pv. campestris (strain 8004).